We begin with the raw amino-acid sequence, 354 residues long: Photosystem II D2 protein (354 aa).

At Thr2 the chain carries N-acetylthreonine. Phosphothreonine is present on Thr2. A helical membrane pass occupies residues 42–62; sequence CAYFALGGFFTGNTFVTSWYT. His119 contacts chlorophyll a. Residues 126–142 form a helical membrane-spanning segment; it reads GFMLRQFEIARAVKIRP. The pheophytin a site is built by Gln131 and Asn144. Residues 154 to 167 form a helical membrane-spanning segment; that stretch reads VFVSVFLIYPLGQQ. His199 contacts chlorophyll a. The helical transmembrane segment at 209-229 threads the bilayer; it reads AALLCAIHGATVENTLFEDGD. Residues His216 and Phe263 each coordinate a plastoquinone. Residue His216 coordinates Fe cation. His270 contacts Fe cation. The helical transmembrane segment at 280-296 threads the bilayer; sequence GLWMSAIGVVGLALNLR.

The protein belongs to the reaction center PufL/M/PsbA/D family. As to quaternary structure, PSII is composed of 1 copy each of membrane proteins PsbA, PsbB, PsbC, PsbD, PsbE, PsbF, PsbH, PsbI, PsbJ, PsbK, PsbL, PsbM, PsbT, PsbX, PsbY, PsbZ, Psb30/Ycf12, at least 3 peripheral proteins of the oxygen-evolving complex and a large number of cofactors. It forms dimeric complexes. The cofactor is The D1/D2 heterodimer binds P680, chlorophylls that are the primary electron donor of PSII, and subsequent electron acceptors. It shares a non-heme iron and each subunit binds pheophytin, quinone, additional chlorophylls, carotenoids and lipids. There is also a Cl(-1) ion associated with D1 and D2, which is required for oxygen evolution. The PSII complex binds additional chlorophylls, carotenoids and specific lipids..

It is found in the plastid. It localises to the chloroplast thylakoid membrane. The catalysed reaction is 2 a plastoquinone + 4 hnu + 2 H2O = 2 a plastoquinol + O2. In terms of biological role, photosystem II (PSII) is a light-driven water:plastoquinone oxidoreductase that uses light energy to abstract electrons from H(2)O, generating O(2) and a proton gradient subsequently used for ATP formation. It consists of a core antenna complex that captures photons, and an electron transfer chain that converts photonic excitation into a charge separation. The D1/D2 (PsbA/PsbD) reaction center heterodimer binds P680, the primary electron donor of PSII as well as several subsequent electron acceptors. D2 is needed for assembly of a stable PSII complex. This is Photosystem II D2 protein from Mesostigma viride (Green alga).